A 326-amino-acid chain; its full sequence is N-acetyl-gamma-glutamyl-phosphate reductase (326 aa).

The active site involves cysteine 155.

This sequence belongs to the NAGSA dehydrogenase family. Type 1 subfamily.

It is found in the cytoplasm. It carries out the reaction N-acetyl-L-glutamate 5-semialdehyde + phosphate + NADP(+) = N-acetyl-L-glutamyl 5-phosphate + NADPH + H(+). It functions in the pathway amino-acid biosynthesis; L-arginine biosynthesis; N(2)-acetyl-L-ornithine from L-glutamate: step 3/4. Its function is as follows. Catalyzes the NADPH-dependent reduction of N-acetyl-5-glutamyl phosphate to yield N-acetyl-L-glutamate 5-semialdehyde. The sequence is that of N-acetyl-gamma-glutamyl-phosphate reductase from Shewanella baltica (strain OS195).